The primary structure comprises 89 residues: MRKKSSSNKEETALHPPPENFETATAELEQIVAGMETGQMSLEDALSAYKRGVELLQYCQNILKNSQQQIKILEADMLKHFSPAEHDAS.

Residues 1-22 (MRKKSSSNKEETALHPPPENFE) form a disordered region.

The protein belongs to the XseB family. In terms of assembly, heterooligomer composed of large and small subunits.

It is found in the cytoplasm. The catalysed reaction is Exonucleolytic cleavage in either 5'- to 3'- or 3'- to 5'-direction to yield nucleoside 5'-phosphates.. Its function is as follows. Bidirectionally degrades single-stranded DNA into large acid-insoluble oligonucleotides, which are then degraded further into small acid-soluble oligonucleotides. The chain is Exodeoxyribonuclease 7 small subunit from Nitrosomonas europaea (strain ATCC 19718 / CIP 103999 / KCTC 2705 / NBRC 14298).